The primary structure comprises 95 residues: Integration host factor subunit beta (95 aa).

Residues 52–95 are disordered; sequence SLHHRPPRVGRNPKTGESVHLPSRRVPHFKPGKELRDRVNSIKD. Over residues 82 to 95 the composition is skewed to basic and acidic residues; sequence PGKELRDRVNSIKD.

Belongs to the bacterial histone-like protein family. In terms of assembly, heterodimer of an alpha and a beta chain.

This protein is one of the two subunits of integration host factor, a specific DNA-binding protein that functions in genetic recombination as well as in transcriptional and translational control. The protein is Integration host factor subunit beta of Methylococcus capsulatus (strain ATCC 33009 / NCIMB 11132 / Bath).